The chain runs to 430 residues: Levansucrase Lscgamma (430 aa).

The sucrose site is built by W60, D61, A147, R217, and D218. D61 functions as the Nucleophile in the catalytic mechanism. The active-site Proton donor/acceptor is the E302.

It belongs to the glycosyl hydrolase 68 family. Homodimer.

The enzyme catalyses [6)-beta-D-fructofuranosyl-(2-&gt;](n) alpha-D-glucopyranoside + sucrose = [6)-beta-D-fructofuranosyl-(2-&gt;](n+1) alpha-D-glucopyranoside + D-glucose. Its activity is regulated as follows. Sucrose hydrolase activity is negatively affected by salt concentration. The levan polymerization rate increases sharply in relation to sucrose concentration reaching the maximum at 100 mM sucrose, and then steadily decreases, suggesting a strong inhibition of the activity by the substrate. Functionally, catalyzes the synthesis of levan, a fructose polymer, by transferring the fructosyl moiety from sucrose to a growing acceptor molecule. Also displays sucrose hydrolase activity. Can depolymerize the levan produced once substrate is completely exhausted. In Pseudomonas syringae pv. actinidiae, this protein is Levansucrase Lscgamma.